We begin with the raw amino-acid sequence, 639 residues long: AP2-like ethylene-responsive transcription factor CRL5 (639 aa).

Disordered regions lie at residues 25–59 (PHMA…QQQH) and 258–277 (GRKR…HHRK). A compositionally biased stretch (low complexity) spans 43–59 (QQQQQQQQQQHHQQQQH). DNA-binding regions (AP2/ERF) lie at residues 288-351 (QYRG…INFP) and 387-445 (MYRG…TNFD). A compositionally biased stretch (low complexity) spans 547 to 561 (QQQQQHMSMSAASSL). The interval 547 to 579 (QQQQQHMSMSAASSLVTSLSNSREGSPDRGGGL) is disordered.

Belongs to the AP2/ERF transcription factor family. AP2 subfamily. As to expression, highly expressed at the base of the stem. Expressed in stems. Expressed a low levels in crown roots and seeds. Expressed in the stem region where adventitious (crown) root initiation occurs.

The protein resides in the nucleus. In terms of biological role, acts as a positive regulator of adventitious (crown) root formation by promoting its initiation. Promotes adventitious root initiation through repression of cytokinin signaling by positively regulating the two-component response regulator RR1. Regulated by the auxin response factor and transcriptional activator ARF23/ARF1. This is AP2-like ethylene-responsive transcription factor CRL5 from Oryza sativa subsp. japonica (Rice).